The sequence spans 458 residues: MKEFDTIAAIATALGEGGIAIIRVSGNKALEIVNKIFRGINGKDLLDIKPYTMRYGHMIDENNEIIDEVIVSFMKGPRSFTAEDTVEINCHGGIVATNKVLQNVIKAGARLAEPGEFTKRAFLNGRIDLSQAEAVMDIITAKTELSMKSAMTQSQGRLSTEINNLRKEALDILALIEYAVDFTEDDEEPDETIPVKVKEDVITLRGKVNNLIDTADEGKLIRDGLSMVIVGKPNVGKSSLLNALLNEKRAIVTDIAGTTRDVIEEYINLDGIPVRLVDTAGIRETEDVVEKIGVEKSKEKINEADLVILMLDTSRELDEEDKEIIDYIKDRKYIVLLNKVDLDRKLSSEIVDNLENKIELSAKTGFGIDDLKSKIKDLFFNGSIDAESVMVTNTRHKEALYRASENLDGALNGLNNNEFLDLVSIYVTSALRALGEITGAELEEDLVNKIFAEFCCGK.

3 residues coordinate (6S)-5-formyl-5,6,7,8-tetrahydrofolate: arginine 23, glutamate 87, and arginine 126. Residues glycine 224 to phenylalanine 380 enclose the TrmE-type G domain. Position 234 (asparagine 234) interacts with K(+). GTP-binding positions include asparagine 234–serine 239, threonine 253–threonine 259, and aspartate 278–glycine 281. Serine 238 contributes to the Mg(2+) binding site. 3 residues coordinate K(+): threonine 253, isoleucine 255, and threonine 258. Residue threonine 259 coordinates Mg(2+). (6S)-5-formyl-5,6,7,8-tetrahydrofolate is bound at residue lysine 458.

It belongs to the TRAFAC class TrmE-Era-EngA-EngB-Septin-like GTPase superfamily. TrmE GTPase family. Homodimer. Heterotetramer of two MnmE and two MnmG subunits. K(+) serves as cofactor.

The protein localises to the cytoplasm. In terms of biological role, exhibits a very high intrinsic GTPase hydrolysis rate. Involved in the addition of a carboxymethylaminomethyl (cmnm) group at the wobble position (U34) of certain tRNAs, forming tRNA-cmnm(5)s(2)U34. This Clostridium perfringens (strain ATCC 13124 / DSM 756 / JCM 1290 / NCIMB 6125 / NCTC 8237 / Type A) protein is tRNA modification GTPase MnmE.